The primary structure comprises 418 residues: Light-independent protochlorophyllide reductase subunit N (418 aa).

Cys-17, Cys-42, and Cys-103 together coordinate [4Fe-4S] cluster.

This sequence belongs to the BchN/ChlN family. Protochlorophyllide reductase is composed of three subunits; ChlL, ChlN and ChlB. Forms a heterotetramer of two ChlB and two ChlN subunits. [4Fe-4S] cluster is required as a cofactor.

It carries out the reaction chlorophyllide a + oxidized 2[4Fe-4S]-[ferredoxin] + 2 ADP + 2 phosphate = protochlorophyllide a + reduced 2[4Fe-4S]-[ferredoxin] + 2 ATP + 2 H2O. Its pathway is porphyrin-containing compound metabolism; chlorophyll biosynthesis (light-independent). Component of the dark-operative protochlorophyllide reductase (DPOR) that uses Mg-ATP and reduced ferredoxin to reduce ring D of protochlorophyllide (Pchlide) to form chlorophyllide a (Chlide). This reaction is light-independent. The NB-protein (ChlN-ChlB) is the catalytic component of the complex. The protein is Light-independent protochlorophyllide reductase subunit N of Prochlorococcus marinus (strain MIT 9312).